The chain runs to 105 residues: Small ribosomal subunit protein uS10 (105 aa).

It belongs to the universal ribosomal protein uS10 family. As to quaternary structure, part of the 30S ribosomal subunit.

Its function is as follows. Involved in the binding of tRNA to the ribosomes. This is Small ribosomal subunit protein uS10 from Lachnoclostridium phytofermentans (strain ATCC 700394 / DSM 18823 / ISDg) (Clostridium phytofermentans).